A 696-amino-acid polypeptide reads, in one-letter code: Equisetin cluster transcription factor eqxF (696 aa).

Disordered stretches follow at residues methionine 1–arginine 24 and asparagine 73–tyrosine 117.

It is found in the nucleus. In terms of biological role, transcription factor that regulates the expression of the gene cluster that mediates the biosynthesis of Equisetin. The polypeptide is Equisetin cluster transcription factor eqxF (Fusarium heterosporum).